The following is a 711-amino-acid chain: Putative membrane protein IgaA homolog (711 aa).

A topological domain (periplasmic) is located at residue M1. The helical transmembrane segment at 2 to 22 (STIVIFLAALLACSLLAGWLI) threads the bilayer. The Cytoplasmic portion of the chain corresponds to 23 to 204 (KVRSRRRQLP…YALSRPRGLR (182 aa)). A run of 2 helical transmembrane segments spans residues 205-225 (EALL…TPDV) and 226-246 (FVPW…WGLF). At 247 to 339 (APPAKSSLRE…KNFPLQHWLR (93 aa)) the chain is on the cytoplasmic side. The helical transmembrane segment at 340–360 (STIIAAGSLLVLFMLLFWIPL) threads the bilayer. Over 361 to 655 (DMPLKFTLSW…IPDRSGLWRY (295 aa)) the chain is Periplasmic. A helical membrane pass occupies residues 656–676 (LSTTLLLLTMLGSAIYNGVQA). Topologically, residues 677 to 711 (WRRYQRHRTRMMEIQAYYESCLNPQLITPSESLIE) are cytoplasmic.

The protein belongs to the IgaA family.

The protein localises to the cell inner membrane. The sequence is that of Putative membrane protein IgaA homolog (yrfF) from Escherichia coli (strain K12).